Here is a 317-residue protein sequence, read N- to C-terminus: Dehydrogenase/reductase SDR family member 12 (317 aa).

Residues serine 50 and isoleucine 52 each contribute to the NAD(+) site. Residue serine 175 participates in substrate binding. Residues tyrosine 201, lysine 205, and threonine 234 each coordinate NAD(+). The active-site Proton acceptor is the tyrosine 201.

This sequence belongs to the short-chain dehydrogenases/reductases (SDR) family.

Functionally, putative oxidoreductase. In Homo sapiens (Human), this protein is Dehydrogenase/reductase SDR family member 12.